A 312-amino-acid polypeptide reads, in one-letter code: Structure-specific endonuclease subunit SLX1 (312 aa).

Residues Asp9–Lys92 enclose the GIY-YIG domain. The segment at Cys219–Cys282 adopts an SLX1-type zinc-finger fold.

This sequence belongs to the SLX1 family. Forms a heterodimer with SLX4. A divalent metal cation is required as a cofactor.

The protein localises to the nucleus. In terms of biological role, catalytic subunit of the SLX1-SLX4 structure-specific endonuclease that resolves DNA secondary structures generated during DNA repair and recombination. Has endonuclease activity towards branched DNA substrates, introducing single-strand cuts in duplex DNA close to junctions with ss-DNA. This is Structure-specific endonuclease subunit SLX1 from Candida glabrata (strain ATCC 2001 / BCRC 20586 / JCM 3761 / NBRC 0622 / NRRL Y-65 / CBS 138) (Yeast).